A 269-amino-acid chain; its full sequence is Diaminopimelate epimerase (269 aa).

Substrate-binding residues include Asn-15, Gln-49, and Asn-66. Cys-75 acts as the Proton donor in catalysis. Residues Gly-76 to Asn-77, Asn-155, Asn-187, and Glu-204 to Arg-205 each bind substrate. Catalysis depends on Cys-213, which acts as the Proton acceptor. Gly-214 to Ser-215 lines the substrate pocket.

This sequence belongs to the diaminopimelate epimerase family. Homodimer.

The protein localises to the cytoplasm. It catalyses the reaction (2S,6S)-2,6-diaminopimelate = meso-2,6-diaminopimelate. The protein operates within amino-acid biosynthesis; L-lysine biosynthesis via DAP pathway; DL-2,6-diaminopimelate from LL-2,6-diaminopimelate: step 1/1. Catalyzes the stereoinversion of LL-2,6-diaminopimelate (L,L-DAP) to meso-diaminopimelate (meso-DAP), a precursor of L-lysine and an essential component of the bacterial peptidoglycan. This Rickettsia bellii (strain OSU 85-389) protein is Diaminopimelate epimerase.